Consider the following 411-residue polypeptide: Phosphopentomutase (411 aa).

Asp14, Asp306, His311, Asp347, His348, and His359 together coordinate Mn(2+).

The protein belongs to the phosphopentomutase family. Mn(2+) is required as a cofactor.

The protein localises to the cytoplasm. It catalyses the reaction 2-deoxy-alpha-D-ribose 1-phosphate = 2-deoxy-D-ribose 5-phosphate. The enzyme catalyses alpha-D-ribose 1-phosphate = D-ribose 5-phosphate. It participates in carbohydrate degradation; 2-deoxy-D-ribose 1-phosphate degradation; D-glyceraldehyde 3-phosphate and acetaldehyde from 2-deoxy-alpha-D-ribose 1-phosphate: step 1/2. Isomerase that catalyzes the conversion of deoxy-ribose 1-phosphate (dRib-1-P) and ribose 1-phosphate (Rib-1-P) to deoxy-ribose 5-phosphate (dRib-5-P) and ribose 5-phosphate (Rib-5-P), respectively. The sequence is that of Phosphopentomutase from Lactococcus lactis subsp. cremoris (strain SK11).